The primary structure comprises 160 residues: Ribosomal RNA large subunit methyltransferase H (160 aa).

Glycine 108 contributes to the S-adenosyl-L-methionine binding site.

It belongs to the RNA methyltransferase RlmH family. In terms of assembly, homodimer.

It localises to the cytoplasm. The catalysed reaction is pseudouridine(1915) in 23S rRNA + S-adenosyl-L-methionine = N(3)-methylpseudouridine(1915) in 23S rRNA + S-adenosyl-L-homocysteine + H(+). In terms of biological role, specifically methylates the pseudouridine at position 1915 (m3Psi1915) in 23S rRNA. This chain is Ribosomal RNA large subunit methyltransferase H, found in Rhodopseudomonas palustris (strain BisA53).